Here is a 551-residue protein sequence, read N- to C-terminus: Calcium-dependent protein kinase 3 (551 aa).

The interval 1-57 (MGNCCRSPAAAAREDVKSSHFPASAGKKKPHQARNGGVGGGGGGGGGGGGGGGAGQK) is disordered. A lipid anchor (N-myristoyl glycine) is attached at glycine 2. A compositionally biased stretch (gly residues) spans 36-55 (GGVGGGGGGGGGGGGGGGAG). In terms of domain architecture, Protein kinase spans 77–335 (YALDRELGRG…AKQVLEHPWL (259 aa)). Residues 83 to 91 (LGRGEFGVT) and lysine 106 each bind ATP. The active-site Proton acceptor is aspartate 201. Residues 341–371 (APNVPLGDIVKSRLKQFSRMNRFKRRALRVI) form an autoinhibitory domain region. EF-hand domains lie at 378-413 (EEVE…FGSH), 414-449 (LAES…LQRM), 450-485 (ANDE…DGAG), and 486-521 (DSME…GTDW). Ca(2+) contacts are provided by aspartate 391, aspartate 393, aspartate 395, glutamate 402, aspartate 427, asparagine 429, glutamate 438, aspartate 463, aspartate 465, asparagine 467, tyrosine 469, glutamate 474, aspartate 499, aspartate 501, aspartate 503, lysine 505, and glutamate 510.

This sequence belongs to the protein kinase superfamily. Ser/Thr protein kinase family. CDPK subfamily. In terms of tissue distribution, expressed in roots and developing seeds.

It localises to the membrane. The enzyme catalyses L-seryl-[protein] + ATP = O-phospho-L-seryl-[protein] + ADP + H(+). It carries out the reaction L-threonyl-[protein] + ATP = O-phospho-L-threonyl-[protein] + ADP + H(+). Activated by calcium. Autophosphorylation may play an important role in the regulation of the kinase activity. Functionally, may play a role in signal transduction pathways that involve calcium as a second messenger. The protein is Calcium-dependent protein kinase 3 of Oryza sativa subsp. japonica (Rice).